Reading from the N-terminus, the 667-residue chain is Leucine-rich repeat-containing protein 43 (667 aa).

Positions 1-11 (METSESSTSDY) are enriched in polar residues. The segment at 1 to 24 (METSESSTSDYRQTEGEGEGVPGT) is disordered. LRR repeat units lie at residues 148–169 (KLEE…NLPP), 170–191 (TLKV…CSAP), 194–213 (RLQH…ESLY), and 221–242 (QLVS…ILGL). The region spanning 256-294 (NPLSLVPYYRGFTIDSLAHLCVLDDITVSPNEKHQFRGL) is the LRRCT domain. Disordered regions lie at residues 374-407 (FSGT…TEEM), 533-570 (ESPL…RQDP), and 616-640 (SKKV…SGYQ). The span at 377–386 (TDEEDQQEDP) shows a compositional bias: acidic residues. Over residues 390–399 (RHRHRGRQRF) the composition is skewed to basic residues. Residues 540–553 (KGKDNNKKKEPAKD) show a composition bias toward basic and acidic residues. Residues 617 to 627 (KKVKKSLKKDR) show a composition bias toward basic residues.

The sequence is that of Leucine-rich repeat-containing protein 43 (Lrrc43) from Mus musculus (Mouse).